The following is a 549-amino-acid chain: CTP synthase (549 aa).

Residues 1 to 266 form an amidoligase domain region; that stretch reads MSAKYIFVTG…DKLALRYLHL (266 aa). Serine 14 lines the CTP pocket. Serine 14 provides a ligand contact to UTP. ATP-binding positions include 15 to 20 and aspartate 72; that span reads SLGKGL. Mg(2+) is bound by residues aspartate 72 and glutamate 140. CTP contacts are provided by residues 147–149, 187–192, and lysine 223; these read DIE and KTKPTQ. Residues 187-192 and lysine 223 contribute to the UTP site; that span reads KTKPTQ. Residue 239-241 coordinates ATP; that stretch reads KDV. The region spanning 291–533 is the Glutamine amidotransferase type-1 domain; that stretch reads SIGIVGKYVE…VKAAYQNHKP (243 aa). Residue glycine 353 coordinates L-glutamine. Cysteine 380 acts as the Nucleophile; for glutamine hydrolysis in catalysis. Residues 381–384, glutamate 404, and arginine 461 each bind L-glutamine; that span reads LGMQ. Residues histidine 506 and glutamate 508 contribute to the active site.

It belongs to the CTP synthase family. As to quaternary structure, homotetramer.

The enzyme catalyses UTP + L-glutamine + ATP + H2O = CTP + L-glutamate + ADP + phosphate + 2 H(+). It carries out the reaction L-glutamine + H2O = L-glutamate + NH4(+). It catalyses the reaction UTP + NH4(+) + ATP = CTP + ADP + phosphate + 2 H(+). It functions in the pathway pyrimidine metabolism; CTP biosynthesis via de novo pathway; CTP from UDP: step 2/2. Its activity is regulated as follows. Allosterically activated by GTP, when glutamine is the substrate; GTP has no effect on the reaction when ammonia is the substrate. The allosteric effector GTP functions by stabilizing the protein conformation that binds the tetrahedral intermediate(s) formed during glutamine hydrolysis. Inhibited by the product CTP, via allosteric rather than competitive inhibition. Catalyzes the ATP-dependent amination of UTP to CTP with either L-glutamine or ammonia as the source of nitrogen. Regulates intracellular CTP levels through interactions with the four ribonucleotide triphosphates. The polypeptide is CTP synthase (Acidobacterium capsulatum (strain ATCC 51196 / DSM 11244 / BCRC 80197 / JCM 7670 / NBRC 15755 / NCIMB 13165 / 161)).